Here is a 274-residue protein sequence, read N- to C-terminus: Exosome complex component Rrp42 (274 aa).

The protein belongs to the RNase PH family. Rrp42 subfamily. As to quaternary structure, component of the archaeal exosome complex. Forms a hexameric ring-like arrangement composed of 3 Rrp41-Rrp42 heterodimers. The hexameric ring associates with a trimer of Rrp4 and/or Csl4 subunits.

Its subcellular location is the cytoplasm. Functionally, non-catalytic component of the exosome, which is a complex involved in RNA degradation. Contributes to the structuring of the Rrp41 active site. This Pyrobaculum aerophilum (strain ATCC 51768 / DSM 7523 / JCM 9630 / CIP 104966 / NBRC 100827 / IM2) protein is Exosome complex component Rrp42.